A 203-amino-acid polypeptide reads, in one-letter code: Large ribosomal subunit protein bL25 (203 aa).

Belongs to the bacterial ribosomal protein bL25 family. CTC subfamily. Part of the 50S ribosomal subunit; part of the 5S rRNA/L5/L18/L25 subcomplex. Contacts the 5S rRNA. Binds to the 5S rRNA independently of L5 and L18.

Its function is as follows. This is one of the proteins that binds to the 5S RNA in the ribosome where it forms part of the central protuberance. This chain is Large ribosomal subunit protein bL25, found in Paraburkholderia phymatum (strain DSM 17167 / CIP 108236 / LMG 21445 / STM815) (Burkholderia phymatum).